The following is a 183-amino-acid chain: Ribosomal RNA small subunit methyltransferase G (183 aa).

Residues Gly60, Phe65, 111–112 (IE), and Arg125 each bind S-adenosyl-L-methionine.

Belongs to the methyltransferase superfamily. RNA methyltransferase RsmG family.

It is found in the cytoplasm. The catalysed reaction is guanosine(527) in 16S rRNA + S-adenosyl-L-methionine = N(7)-methylguanosine(527) in 16S rRNA + S-adenosyl-L-homocysteine. Functionally, specifically methylates the N7 position of guanine in position 527 of 16S rRNA. The polypeptide is Ribosomal RNA small subunit methyltransferase G (Campylobacter hominis (strain ATCC BAA-381 / DSM 21671 / CCUG 45161 / LMG 19568 / NCTC 13146 / CH001A)).